A 180-amino-acid chain; its full sequence is Cytokinin-beta-glucosidase 1 (180 aa).

Its function is as follows. Hydrolyzes cytokinin glucosides thus liberating free cytokinins. In Linaria vulgaris (Toadflax), this protein is Cytokinin-beta-glucosidase 1 (ROLC1).